Here is a 282-residue protein sequence, read N- to C-terminus: tRNA uridine(34) hydroxylase (282 aa).

In terms of domain architecture, Rhodanese spans 128–222 (EGRPVVMLDT…YFEEVGGSHY (95 aa)). The Cysteine persulfide intermediate role is filled by Cys182.

Belongs to the TrhO family.

It carries out the reaction uridine(34) in tRNA + AH2 + O2 = 5-hydroxyuridine(34) in tRNA + A + H2O. Functionally, catalyzes oxygen-dependent 5-hydroxyuridine (ho5U) modification at position 34 in tRNAs. The sequence is that of tRNA uridine(34) hydroxylase from Cupriavidus necator (strain ATCC 17699 / DSM 428 / KCTC 22496 / NCIMB 10442 / H16 / Stanier 337) (Ralstonia eutropha).